Reading from the N-terminus, the 277-residue chain is Small ribosomal subunit protein uS2 (277 aa).

The segment at 1–78 is disordered; sequence MSENDEGTDA…PADEEPVLDE (78 aa).

This sequence belongs to the universal ribosomal protein uS2 family.

The protein is Small ribosomal subunit protein uS2 of Natronomonas pharaonis (strain ATCC 35678 / DSM 2160 / CIP 103997 / JCM 8858 / NBRC 14720 / NCIMB 2260 / Gabara) (Halobacterium pharaonis).